The primary structure comprises 150 residues: Flagellar assembly factor FliW (150 aa).

The protein belongs to the FliW family. As to quaternary structure, interacts with translational regulator CsrA and flagellin(s).

It localises to the cytoplasm. Functionally, acts as an anti-CsrA protein, binds CsrA and prevents it from repressing translation of its target genes, one of which is flagellin. Binds to flagellin and participates in the assembly of the flagellum. The chain is Flagellar assembly factor FliW from Leptospira interrogans serogroup Icterohaemorrhagiae serovar copenhageni (strain Fiocruz L1-130).